We begin with the raw amino-acid sequence, 85 residues long: Large ribosomal subunit protein bL27 (85 aa).

The protein belongs to the bacterial ribosomal protein bL27 family.

This chain is Large ribosomal subunit protein bL27, found in Pseudomonas fluorescens (strain SBW25).